Here is a 256-residue protein sequence, read N- to C-terminus: UstYa family oxidase phomYc (256 aa).

The helical transmembrane segment at 38-58 (LVLVLQFVLIISLLASLHILG) threads the bilayer. 2 N-linked (GlcNAc...) asparagine glycosylation sites follow: N64 and N132. Positions 158–162 (HQLHC) match the HXXHC 1 motif. N179 carries an N-linked (GlcNAc...) asparagine glycan. Residues 193-197 (HIDHC) carry the HXXHC 2 motif.

The protein belongs to the ustYa family.

The protein localises to the membrane. It functions in the pathway mycotoxin biosynthesis. In terms of biological role, ustYa family oxidase; part of the gene cluster that mediates the biosynthesis of the phomopsins, a group of hexapeptide mycotoxins which infects lupins and causes lupinosis disease in livestock. Within the pathway, phomYc catalyzes the desaturation of the Ile moiety into 2,3-dehydroisoleucine (dIle). The pathway starts with the processing of the precursor phomA by several endopeptidases including kexin proteases as well as the cluster-specific S41 family peptidase phomP1 and the oligopeptidase phomG to produce 10 identical copies of the hexapeptide Tyr-Val-Ile-Pro-Ile-Asp. After being excised from the precursor peptide, the core peptides are cyclized and modified post-translationally by enzymes encoded within the gene cluster. The timing and order of proteolysis of the phomA precursor and PTMs are still unknown. Two tyrosinase-like enzymes, phomQ1 and phomQ2, catalyze the chlorination and hydroxylation of Tyr, respectively. PhomYb, is proposed to be involved in the construction of the macrocyclic structure. The other 4 ustYa family proteins may be involved in PTMs that generate the unique structure of phomopsin A. PhomYa is required for the hydroxylation of C-beta of Tyr. PhomYc, phomYd, and phomYe are responsible for the biosynthesis of 2,3-dehydroisoleucine (dIle), 2,3-dehydroaspartic acid (dAsp), and 3,4-dehydroproline (dPro), respectively. While dIle formation by phomYc is indispensable for the installation of dAsp by phomYd, the order of the other PTMs have not been elucidated yet. Most of the biosynthetic enzymes likely have broad substrate specificity, and thus, there might be a metabolic grid from a precursor to phomopsin A. The enzyme(s) responsible for the biosynthesis of 3,4-dehydrovaline (dVal) have also not been identified yet. Finally, phomM acts as an S-adenosylmethionine-dependent alpha-N-methyltransferase that catalyzes two successive N-methylation reactions, converting N-desmethyl-phomopsin A to phomopsin A and phomopsin A further to an N,N-dimethylated congener called phomopsin E. The chain is UstYa family oxidase phomYc from Diaporthe leptostromiformis (Lupinosis disease fungus).